A 187-amino-acid polypeptide reads, in one-letter code: Peptidyl-tRNA hydrolase (187 aa).

Tyrosine 18 provides a ligand contact to tRNA. The active-site Proton acceptor is the histidine 23. Phenylalanine 65, asparagine 67, and asparagine 113 together coordinate tRNA.

Belongs to the PTH family. Monomer.

The protein resides in the cytoplasm. The enzyme catalyses an N-acyl-L-alpha-aminoacyl-tRNA + H2O = an N-acyl-L-amino acid + a tRNA + H(+). In terms of biological role, hydrolyzes ribosome-free peptidyl-tRNAs (with 1 or more amino acids incorporated), which drop off the ribosome during protein synthesis, or as a result of ribosome stalling. Functionally, catalyzes the release of premature peptidyl moieties from peptidyl-tRNA molecules trapped in stalled 50S ribosomal subunits, and thus maintains levels of free tRNAs and 50S ribosomes. The chain is Peptidyl-tRNA hydrolase from Coxiella burnetii (strain CbuK_Q154) (Coxiella burnetii (strain Q154)).